A 486-amino-acid polypeptide reads, in one-letter code: CUGBP Elav-like family member 1 (486 aa).

Residue Met1 is modified to N-acetylmethionine. A Phosphothreonine modification is found at Thr4. 2 consecutive RRM domains span residues 16–99 and 108–188; these read IKMF…PADS and RKLF…FADT. A Glycyl lysine isopeptide (Lys-Gly) (interchain with G-Cter in SUMO2) cross-link involves residue Lys109. Phosphoserine is present on residues Ser179 and Ser302. The tract at residues 277–309 is disordered; the sequence is TPSGTNALTTSSSPLSVLTSSGSSPSSSSSNSV. Positions 284 to 309 are enriched in low complexity; it reads LTTSSSPLSVLTSSGSSPSSSSSNSV. Residues 401–479 form the RRM 3 domain; sequence ANLFIYHLPQ…KRLKVQLKRS (79 aa).

Belongs to the CELF/BRUNOL family. Component of an EIF2 complex at least composed of CELF1/CUGBP1, CALR, CALR3, EIF2S1, EIF2S2, HSP90B1 and HSPA5. Associates with polysomes. Interacts with HNRNPH1; the interaction in RNA-dependent. Interacts with PARN. Post-translationally, phosphorylated. Its phosphorylation status increases in senescent cells. As to expression, ubiquitous.

Its subcellular location is the nucleus. It localises to the cytoplasm. RNA-binding protein implicated in the regulation of several post-transcriptional events. Involved in pre-mRNA alternative splicing, mRNA translation and stability. Mediates exon inclusion and/or exclusion in pre-mRNA that are subject to tissue-specific and developmentally regulated alternative splicing. Specifically activates exon 5 inclusion of cardiac isoforms of TNNT2 during heart remodeling at the juvenile to adult transition. Acts both as an activator and as a repressor of a pair of coregulated exons: promotes inclusion of the smooth muscle (SM) exon but exclusion of the non-muscle (NM) exon in actinin pre-mRNAs. Activates SM exon 5 inclusion by antagonizing the repressive effect of PTB. Promotes exclusion of exon 11 of the INSR pre-mRNA. Inhibits, together with HNRNPH1, insulin receptor (IR) pre-mRNA exon 11 inclusion in myoblast. Increases translation and controls the choice of translation initiation codon of CEBPB mRNA. Increases mRNA translation of CEBPB in aging liver. Increases translation of CDKN1A mRNA by antagonizing the repressive effect of CALR3. Mediates rapid cytoplasmic mRNA deadenylation. Recruits the deadenylase PARN to the poly(A) tail of EDEN-containing mRNAs to promote their deadenylation. Required for completion of spermatogenesis. Binds to (CUG)n triplet repeats in the 3'-UTR of transcripts such as DMPK and to Bruno response elements (BREs). Binds to muscle-specific splicing enhancer (MSE) intronic sites flanking the alternative exon 5 of TNNT2 pre-mRNA. Binds to AU-rich sequences (AREs or EDEN-like) localized in the 3'-UTR of JUN and FOS mRNAs. Binds to the IR RNA. Binds to the 5'-region of CDKN1A and CEBPB mRNAs. Binds with the 5'-region of CEBPB mRNA in aging liver. May be a specific regulator of miRNA biogenesis. Binds to primary microRNA pri-MIR140 and, with CELF2, negatively regulates the processing to mature miRNA. This Homo sapiens (Human) protein is CUGBP Elav-like family member 1 (CELF1).